Here is a 491-residue protein sequence, read N- to C-terminus: Ketol-acid reductoisomerase (NADP(+)) (491 aa).

The KARI N-terminal Rossmann domain maps to 15–208 (AQLGKCRFMA…GGHRAGVLES (194 aa)). Residues 45–48 (CGAQ), arginine 68, arginine 76, serine 78, and 108–110 (DKQ) each bind NADP(+). Residue histidine 132 is part of the active site. Glycine 158 provides a ligand contact to NADP(+). KARI C-terminal knotted domains are found at residues 209–344 (SFVA…TAPQ) and 345–484 (YEGK…MTDM). Mg(2+)-binding residues include aspartate 217, glutamate 221, glutamate 389, and glutamate 393. Residue serine 414 participates in substrate binding.

Belongs to the ketol-acid reductoisomerase family. It depends on Mg(2+) as a cofactor.

The enzyme catalyses (2R)-2,3-dihydroxy-3-methylbutanoate + NADP(+) = (2S)-2-acetolactate + NADPH + H(+). The catalysed reaction is (2R,3R)-2,3-dihydroxy-3-methylpentanoate + NADP(+) = (S)-2-ethyl-2-hydroxy-3-oxobutanoate + NADPH + H(+). It participates in amino-acid biosynthesis; L-isoleucine biosynthesis; L-isoleucine from 2-oxobutanoate: step 2/4. The protein operates within amino-acid biosynthesis; L-valine biosynthesis; L-valine from pyruvate: step 2/4. In terms of biological role, involved in the biosynthesis of branched-chain amino acids (BCAA). Catalyzes an alkyl-migration followed by a ketol-acid reduction of (S)-2-acetolactate (S2AL) to yield (R)-2,3-dihydroxy-isovalerate. In the isomerase reaction, S2AL is rearranged via a Mg-dependent methyl migration to produce 3-hydroxy-3-methyl-2-ketobutyrate (HMKB). In the reductase reaction, this 2-ketoacid undergoes a metal-dependent reduction by NADPH to yield (R)-2,3-dihydroxy-isovalerate. This chain is Ketol-acid reductoisomerase (NADP(+)), found in Klebsiella pneumoniae subsp. pneumoniae (strain ATCC 700721 / MGH 78578).